The chain runs to 248 residues: 3-deoxy-manno-octulosonate cytidylyltransferase (248 aa).

This sequence belongs to the KdsB family.

The protein resides in the cytoplasm. The enzyme catalyses 3-deoxy-alpha-D-manno-oct-2-ulosonate + CTP = CMP-3-deoxy-beta-D-manno-octulosonate + diphosphate. It participates in nucleotide-sugar biosynthesis; CMP-3-deoxy-D-manno-octulosonate biosynthesis; CMP-3-deoxy-D-manno-octulosonate from 3-deoxy-D-manno-octulosonate and CTP: step 1/1. It functions in the pathway bacterial outer membrane biogenesis; lipopolysaccharide biosynthesis. Its function is as follows. Activates KDO (a required 8-carbon sugar) for incorporation into bacterial lipopolysaccharide in Gram-negative bacteria. This chain is 3-deoxy-manno-octulosonate cytidylyltransferase, found in Escherichia fergusonii (strain ATCC 35469 / DSM 13698 / CCUG 18766 / IAM 14443 / JCM 21226 / LMG 7866 / NBRC 102419 / NCTC 12128 / CDC 0568-73).